Reading from the N-terminus, the 250-residue chain is 2,3-bisphosphoglycerate-dependent phosphoglycerate mutase (250 aa).

Substrate contacts are provided by residues 10 to 17 (RHGESQWN), 23 to 24 (TG), Arg-62, 89 to 92 (ERHY), Lys-100, 116 to 117 (RR), and 185 to 186 (GN). The active-site Tele-phosphohistidine intermediate is His-11. Glu-89 (proton donor/acceptor) is an active-site residue.

Belongs to the phosphoglycerate mutase family. BPG-dependent PGAM subfamily. Homodimer.

The enzyme catalyses (2R)-2-phosphoglycerate = (2R)-3-phosphoglycerate. The protein operates within carbohydrate degradation; glycolysis; pyruvate from D-glyceraldehyde 3-phosphate: step 3/5. Functionally, catalyzes the interconversion of 2-phosphoglycerate and 3-phosphoglycerate. The chain is 2,3-bisphosphoglycerate-dependent phosphoglycerate mutase from Yersinia enterocolitica serotype O:8 / biotype 1B (strain NCTC 13174 / 8081).